Reading from the N-terminus, the 96-residue chain is Small ribosomal subunit protein bS6 (96 aa).

This sequence belongs to the bacterial ribosomal protein bS6 family.

Its function is as follows. Binds together with bS18 to 16S ribosomal RNA. This chain is Small ribosomal subunit protein bS6, found in Streptococcus thermophilus (strain ATCC BAA-491 / LMD-9).